We begin with the raw amino-acid sequence, 225 residues long: Single-pass membrane and coiled-coil domain-containing protein 3 (225 aa).

The stretch at 62–92 forms a coiled coil; that stretch reads IKENCDLIIQAIMKIQKELQKVDEALKDKLE. The helical transmembrane segment at 155–175 threads the bilayer; that stretch reads IGASLLGSIGVAVLGLGIDMI. Residues 183–207 are a coiled coil; the sequence is VEKTQLQAAIKSYEKHLVEFKSASE.

It is found in the membrane. In Homo sapiens (Human), this protein is Single-pass membrane and coiled-coil domain-containing protein 3 (SMCO3).